Reading from the N-terminus, the 666-residue chain is ATP-dependent RNA helicase DDX51 (666 aa).

Residue Ala-2 is modified to N-acetylalanine. The segment at Tyr-9 to Glu-152 is disordered. Over residues Pro-10–His-28 the composition is skewed to low complexity. A compositionally biased stretch (basic and acidic residues) spans Ala-33–Gln-48. The segment covering Arg-49 to Ala-58 has biased composition (low complexity). Positions Arg-65 to Arg-75 are enriched in basic residues. Phosphoserine is present on residues Ser-83 and Ser-103. Residues Glu-97–Pro-108 show a composition bias toward acidic residues. The Q motif motif lies at Tyr-221–Ile-229. The 210-residue stretch at Gly-243 to Phe-452 folds into the Helicase ATP-binding domain. Ala-256 to Thr-263 provides a ligand contact to ATP. A DEAD box motif is present at residues Asp-371–Asp-374. The 147-residue stretch at Val-494–Gln-640 folds into the Helicase C-terminal domain.

This sequence belongs to the DEAD box helicase family. DDX51/DBP6 subfamily.

The protein resides in the nucleus. The protein localises to the nucleolus. The enzyme catalyses ATP + H2O = ADP + phosphate + H(+). Its function is as follows. ATP-binding RNA helicase involved in the biogenesis of 60S ribosomal subunits. The sequence is that of ATP-dependent RNA helicase DDX51 (DDX51) from Homo sapiens (Human).